A 365-amino-acid chain; its full sequence is Mitogen-activated protein kinase hog1 (365 aa).

Residues Y20–L299 enclose the Protein kinase domain. ATP-binding positions include V26–V34 and K49. D141 functions as the Proton acceptor in the catalytic mechanism. T171 carries the post-translational modification Phosphothreonine. The TXY motif lies at T171–Y173. Phosphotyrosine is present on Y173.

Belongs to the protein kinase superfamily. Ser/Thr protein kinase family. MAP kinase subfamily. HOG1 sub-subfamily. The cofactor is Mg(2+). Post-translationally, dually phosphorylated on Thr-171 and Tyr-173, which activates the enzyme.

It localises to the cytoplasm. The protein resides in the nucleus. The catalysed reaction is L-seryl-[protein] + ATP = O-phospho-L-seryl-[protein] + ADP + H(+). The enzyme catalyses L-threonyl-[protein] + ATP = O-phospho-L-threonyl-[protein] + ADP + H(+). With respect to regulation, activated by tyrosine and threonine phosphorylation. In terms of biological role, proline-directed serine/threonine-protein kinase involved in a signal transduction pathway that is activated by changes in the osmolarity of the extracellular environment. Controls osmotic regulation of transcription of target genes. This Aspergillus niger (strain ATCC MYA-4892 / CBS 513.88 / FGSC A1513) protein is Mitogen-activated protein kinase hog1 (hog1).